We begin with the raw amino-acid sequence, 142 residues long: Hemoglobin subunit alpha-3 (142 aa).

One can recognise a Globin domain in the interval 2–142; sequence TLTDSDKAAV…VATVLTSKYR (141 aa). H59 lines the O2 pocket. Residue H88 participates in heme b binding.

The protein belongs to the globin family. In terms of assembly, heterotetramer of two alpha chains and two beta chains. Red blood cells.

This is a larval (tadpole) alpha-globin. This is Hemoglobin subunit alpha-3 (hba3) from Xenopus laevis (African clawed frog).